A 100-amino-acid chain; its full sequence is Large ribosomal subunit protein bL21 (100 aa).

This sequence belongs to the bacterial ribosomal protein bL21 family. Part of the 50S ribosomal subunit. Contacts protein L20.

Functionally, this protein binds to 23S rRNA in the presence of protein L20. In Rhodospirillum rubrum (strain ATCC 11170 / ATH 1.1.1 / DSM 467 / LMG 4362 / NCIMB 8255 / S1), this protein is Large ribosomal subunit protein bL21.